A 78-amino-acid polypeptide reads, in one-letter code: MSDTAERIKKIVVEHLGVEPDKVVENASFLDDLGADSLDIIELVMAFEEEFGVEIPDDSVEKIGTVKDAVSYIDEHKA.

Residues 2–77 (SDTAERIKKI…DAVSYIDEHK (76 aa)) form the Carrier domain. Residue serine 37 is modified to O-(pantetheine 4'-phosphoryl)serine.

This sequence belongs to the acyl carrier protein (ACP) family. 4'-phosphopantetheine is transferred from CoA to a specific serine of apo-ACP by AcpS. This modification is essential for activity because fatty acids are bound in thioester linkage to the sulfhydryl of the prosthetic group.

The protein localises to the cytoplasm. It participates in lipid metabolism; fatty acid biosynthesis. Functionally, carrier of the growing fatty acid chain in fatty acid biosynthesis. This is Acyl carrier protein from Zymomonas mobilis subsp. mobilis (strain ATCC 31821 / ZM4 / CP4).